The chain runs to 693 residues: Polyribonucleotide nucleotidyltransferase (693 aa).

Mg(2+) contacts are provided by D485 and D491. Residues 552-611 (PRIETMQINTSKIATVIGPGGKQIRQIIERSGAQVDINDNGLINISANTQESIDKAKELI) enclose the KH domain. An S1 motif domain is found at 621-689 (GKIYNGRVTS…EKGQLKLSHK (69 aa)).

Belongs to the polyribonucleotide nucleotidyltransferase family. Requires Mg(2+) as cofactor.

It localises to the cytoplasm. The catalysed reaction is RNA(n+1) + phosphate = RNA(n) + a ribonucleoside 5'-diphosphate. In terms of biological role, involved in mRNA degradation. Catalyzes the phosphorolysis of single-stranded polyribonucleotides processively in the 3'- to 5'-direction. The polypeptide is Polyribonucleotide nucleotidyltransferase (Chlamydia muridarum (strain MoPn / Nigg)).